We begin with the raw amino-acid sequence, 185 residues long: Ribosome-recycling factor (185 aa).

Belongs to the RRF family.

It is found in the cytoplasm. In terms of biological role, responsible for the release of ribosomes from messenger RNA at the termination of protein biosynthesis. May increase the efficiency of translation by recycling ribosomes from one round of translation to another. The protein is Ribosome-recycling factor of Nitrosospira multiformis (strain ATCC 25196 / NCIMB 11849 / C 71).